Consider the following 211-residue polypeptide: Major fimbrial subunit (211 aa).

Positions 1 to 20 (MKKTLLGSLILLAFAGNVQA) are cleaved as a signal peptide. The cysteines at positions 43 and 83 are disulfide-linked.

Belongs to the fimbrial protein family.

The protein resides in the fimbrium. Its function is as follows. Mediates adherence to oropharyngeal epithelial cells. Helps the airway colonization process. This is Major fimbrial subunit (hifA) from Haemophilus influenzae.